The primary structure comprises 547 residues: Chaperonin GroEL (547 aa).

ATP contacts are provided by residues 30–33, Lys51, 87–91, Gly415, and Asp495; these read TLGP and DGTTT. The tract at residues 526–547 is disordered; sequence KKESAGGGGMPGGMGGMGGMDF. Over residues 530–547 the composition is skewed to gly residues; that stretch reads AGGGGMPGGMGGMGGMDF.

The protein belongs to the chaperonin (HSP60) family. In terms of assembly, forms a cylinder of 14 subunits composed of two heptameric rings stacked back-to-back. Interacts with the co-chaperonin GroES.

The protein localises to the cytoplasm. It carries out the reaction ATP + H2O + a folded polypeptide = ADP + phosphate + an unfolded polypeptide.. In terms of biological role, together with its co-chaperonin GroES, plays an essential role in assisting protein folding. The GroEL-GroES system forms a nano-cage that allows encapsulation of the non-native substrate proteins and provides a physical environment optimized to promote and accelerate protein folding. The chain is Chaperonin GroEL from Hyphomonas neptunium (strain ATCC 15444).